A 330-amino-acid polypeptide reads, in one-letter code: Aspartate--ammonia ligase (330 aa).

This sequence belongs to the class-II aminoacyl-tRNA synthetase family. AsnA subfamily.

It localises to the cytoplasm. It catalyses the reaction L-aspartate + NH4(+) + ATP = L-asparagine + AMP + diphosphate + H(+). The protein operates within amino-acid biosynthesis; L-asparagine biosynthesis; L-asparagine from L-aspartate (ammonia route): step 1/1. The chain is Aspartate--ammonia ligase from Haemophilus ducreyi (strain 35000HP / ATCC 700724).